Reading from the N-terminus, the 211-residue chain is Urease accessory protein UreF (211 aa).

The interval 71-93 (DDADRETDARTPAPAARHASRSQ) is disordered.

The protein belongs to the UreF family. In terms of assembly, ureD, UreF and UreG form a complex that acts as a GTP-hydrolysis-dependent molecular chaperone, activating the urease apoprotein by helping to assemble the nickel containing metallocenter of UreC. The UreE protein probably delivers the nickel.

It is found in the cytoplasm. Its function is as follows. Required for maturation of urease via the functional incorporation of the urease nickel metallocenter. The sequence is that of Urease accessory protein UreF from Mycobacterium bovis (strain ATCC BAA-935 / AF2122/97).